The chain runs to 380 residues: Erythronate-4-phosphate dehydrogenase (380 aa).

Substrate-binding residues include Ser-45 and Thr-66. 2 residues coordinate NAD(+): Asp-146 and Thr-174. The active site involves Arg-207. Asp-231 is an NAD(+) binding site. Residue Glu-236 is part of the active site. His-253 (proton donor) is an active-site residue. Gly-256 contributes to the NAD(+) binding site. Residue Tyr-257 coordinates substrate.

The protein belongs to the D-isomer specific 2-hydroxyacid dehydrogenase family. PdxB subfamily. Homodimer.

The protein localises to the cytoplasm. It carries out the reaction 4-phospho-D-erythronate + NAD(+) = (R)-3-hydroxy-2-oxo-4-phosphooxybutanoate + NADH + H(+). It functions in the pathway cofactor biosynthesis; pyridoxine 5'-phosphate biosynthesis; pyridoxine 5'-phosphate from D-erythrose 4-phosphate: step 2/5. Functionally, catalyzes the oxidation of erythronate-4-phosphate to 3-hydroxy-2-oxo-4-phosphonooxybutanoate. The sequence is that of Erythronate-4-phosphate dehydrogenase from Pseudomonas fluorescens (strain ATCC BAA-477 / NRRL B-23932 / Pf-5).